We begin with the raw amino-acid sequence, 479 residues long: Adenosylhomocysteinase (479 aa).

3 residues coordinate substrate: T65, D145, and E205. Residue 206-208 (TTT) participates in NAD(+) binding. Residues K235 and D239 each contribute to the substrate site. Residues N240, 269–274 (GYGDVG), E292, N327, 348–350 (IGH), and N393 each bind NAD(+).

The protein belongs to the adenosylhomocysteinase family. NAD(+) serves as cofactor.

It localises to the cytoplasm. It carries out the reaction S-adenosyl-L-homocysteine + H2O = L-homocysteine + adenosine. Its pathway is amino-acid biosynthesis; L-homocysteine biosynthesis; L-homocysteine from S-adenosyl-L-homocysteine: step 1/1. In terms of biological role, may play a key role in the regulation of the intracellular concentration of adenosylhomocysteine. The polypeptide is Adenosylhomocysteinase (Janthinobacterium sp. (strain Marseille) (Minibacterium massiliensis)).